A 1488-amino-acid polypeptide reads, in one-letter code: Chromosome partition protein MukB (1488 aa).

34–41 contributes to the ATP binding site; it reads GGNGAGKS. Coiled-coil stretches lie at residues 326–418, 444–472, and 509–602; these read LEAD…QYNQ, LDTFQAKEQEATEKLLSLEQKMSVAQTAH, and RHLA…QRAP. A flexible hinge region spans residues 666-783; the sequence is PGGAEDQRLN…SLPIFGRAAR (118 aa). Coiled-coil stretches lie at residues 835 to 923, 977 to 1116, and 1209 to 1265; these read EAEI…AKLE, EMLS…AKAG, and VEAI…LQSV. Residues 1049-1074 are disordered; it reads ADSGAEERARQRRDELHAQLSNNRSR. Residues 1051–1065 show a composition bias toward basic and acidic residues; it reads SGAEERARQRRDELH.

This sequence belongs to the SMC family. MukB subfamily. In terms of assembly, homodimerization via its hinge domain. Binds to DNA via its C-terminal region. Interacts, and probably forms a ternary complex, with MukE and MukF via its C-terminal region. The complex formation is stimulated by calcium or magnesium. Interacts with tubulin-related protein FtsZ.

It localises to the cytoplasm. Its subcellular location is the nucleoid. Functionally, plays a central role in chromosome condensation, segregation and cell cycle progression. Functions as a homodimer, which is essential for chromosome partition. Involved in negative DNA supercoiling in vivo, and by this means organize and compact chromosomes. May achieve or facilitate chromosome segregation by condensation DNA from both sides of a centrally located replisome during cell division. This chain is Chromosome partition protein MukB, found in Salmonella enteritidis PT4 (strain P125109).